Reading from the N-terminus, the 248-residue chain is PF03932 family protein CutC (248 aa).

Belongs to the CutC family. Homodimer.

Its subcellular location is the cytoplasm. This is PF03932 family protein CutC from Escherichia coli O81 (strain ED1a).